Consider the following 342-residue polypeptide: Putative glycosyltransferases (342 aa).

The next 2 membrane-spanning stretches (helical) occupy residues isoleucine 227–isoleucine 247 and valine 262–isoleucine 282.

The protein belongs to the glycosyltransferase 2 family.

The protein resides in the cell membrane. May play only a redundant role in maintaining cell wall viability and bacterial virulence. This is Putative glycosyltransferases (pimF) from Mycobacterium tuberculosis (strain CDC 1551 / Oshkosh).